The primary structure comprises 151 residues: Large ribosomal subunit protein bL9 (151 aa).

It belongs to the bacterial ribosomal protein bL9 family.

Binds to the 23S rRNA. The chain is Large ribosomal subunit protein bL9 from Mycolicibacterium smegmatis (strain ATCC 700084 / mc(2)155) (Mycobacterium smegmatis).